Reading from the N-terminus, the 189-residue chain is Recombination protein RecR (189 aa).

A C4-type zinc finger spans residues 48–63 (CQTCFHLSAEPTCEIC). In terms of domain architecture, Toprim spans 71–165 (GMLCVVADSR…EVSRIAYGLP (95 aa)).

The protein belongs to the RecR family.

May play a role in DNA repair. It seems to be involved in an RecBC-independent recombinational process of DNA repair. It may act with RecF and RecO. The sequence is that of Recombination protein RecR from Synechococcus sp. (strain CC9311).